The sequence spans 235 residues: Iron-sulfur cluster co-chaperone protein HscB (235 aa).

Positions 41, 44, 58, and 61 each coordinate a divalent metal cation. Positions 72-144 (DYFSLMDCNR…LSRGLYLLKL (73 aa)) constitute a J domain.

This sequence belongs to the HscB family. Interacts with ISCU and HSPA9 to form an iron-sulfur transfer complex. Interacts with SDHAF1 (via the first LYR motif); the interaction recruits the iron-sulfur transfer complex composed of HSC20, HSPA9 and ISCU and mediates the incorporation of iron-sulfur clusters into SDHB which also interacts with HSC20. Interacts with the cytoplasmic form of ISCU and with CIA complex member CIAO1 (via LYR motif). As to quaternary structure, homodimer. Interacts with ISCU (cytoplasmic form); this interaction stabilizes the (Fe-S) clusters on ISCU. Interacts with the CIA complex member CIAO1 (via LYR motif). As to expression, expressed in lung, brain, stomach, spleen, ovary, testis, liver, muscle and heart.

Its subcellular location is the cytoplasm. The protein localises to the mitochondrion. It functions in the pathway cofactor biosynthesis; iron-sulfur cluster biosynthesis. In terms of biological role, acts as a co-chaperone in iron-sulfur cluster assembly in mitochondria. Required for incorporation of iron-sulfur clusters into SDHB, the iron-sulfur protein subunit of succinate dehydrogenase that is involved in complex II of the mitochondrial electron transport chain. Recruited to SDHB by interaction with SDHAF1 which first binds SDHB and then recruits the iron-sulfur transfer complex formed by HSC20, HSPA9 and ISCU through direct binding to HSC20. Plays an essential role in hematopoiesis. Functionally, acts as a co-chaperone in iron-sulfur cluster assembly in the cytoplasm. Also mediates complex formation between components of the cytosolic iron-sulfur biogenesis pathway and the CIA targeting complex composed of CIAO1, DIPK1B/FAM69B and MMS19 by binding directly to the scaffold protein ISCU and to CIAO1. This facilitates iron-sulfur cluster insertion into a number of cytoplasmic and nuclear proteins including POLD1, ELP3, DPYD and PPAT. The protein is Iron-sulfur cluster co-chaperone protein HscB of Homo sapiens (Human).